We begin with the raw amino-acid sequence, 203 residues long: Glycerol-3-phosphate acyltransferase (203 aa).

Helical transmembrane passes span 10 to 30 (LLLGLTALLAYLLGSVPFGIM), 60 to 80 (LAAFLTLVLDAGKGAIAVFLA), 88 to 108 (AAQLAGFAAFLGHCFPVFLGF), 118 to 138 (LGTLLALAWPIGLAACAIWAI), and 162 to 182 (FTLGLPSAVVFCAALATLIFL).

It belongs to the PlsY family. In terms of assembly, probably interacts with PlsX.

It is found in the cell inner membrane. It carries out the reaction an acyl phosphate + sn-glycerol 3-phosphate = a 1-acyl-sn-glycero-3-phosphate + phosphate. It participates in lipid metabolism; phospholipid metabolism. Its function is as follows. Catalyzes the transfer of an acyl group from acyl-phosphate (acyl-PO(4)) to glycerol-3-phosphate (G3P) to form lysophosphatidic acid (LPA). This enzyme utilizes acyl-phosphate as fatty acyl donor, but not acyl-CoA or acyl-ACP. In Jannaschia sp. (strain CCS1), this protein is Glycerol-3-phosphate acyltransferase.